A 135-amino-acid chain; its full sequence is Ig heavy chain V region XIG14 (135 aa).

The first 18 residues, 1–18 (DFIIFFIFMFFSPSCILS), serve as a signal peptide directing secretion. Residues 20–128 (TLQESGPGTV…GYNFDYWGQG (109 aa)) form the Ig-like domain.

The protein is Ig heavy chain V region XIG14 of Xenopus laevis (African clawed frog).